The primary structure comprises 253 residues: 3-deoxy-manno-octulosonate cytidylyltransferase (253 aa).

This sequence belongs to the KdsB family.

The protein localises to the cytoplasm. It carries out the reaction 3-deoxy-alpha-D-manno-oct-2-ulosonate + CTP = CMP-3-deoxy-beta-D-manno-octulosonate + diphosphate. It functions in the pathway nucleotide-sugar biosynthesis; CMP-3-deoxy-D-manno-octulosonate biosynthesis; CMP-3-deoxy-D-manno-octulosonate from 3-deoxy-D-manno-octulosonate and CTP: step 1/1. Its pathway is bacterial outer membrane biogenesis; lipopolysaccharide biosynthesis. Activates KDO (a required 8-carbon sugar) for incorporation into bacterial lipopolysaccharide in Gram-negative bacteria. This Pseudoalteromonas translucida (strain TAC 125) protein is 3-deoxy-manno-octulosonate cytidylyltransferase.